Here is a 126-residue protein sequence, read N- to C-terminus: Holo-[acyl-carrier-protein] synthase (126 aa).

Aspartate 9 and glutamate 58 together coordinate Mg(2+).

Belongs to the P-Pant transferase superfamily. AcpS family. Mg(2+) serves as cofactor.

It localises to the cytoplasm. It catalyses the reaction apo-[ACP] + CoA = holo-[ACP] + adenosine 3',5'-bisphosphate + H(+). Transfers the 4'-phosphopantetheine moiety from coenzyme A to a Ser of acyl-carrier-protein. This Photorhabdus laumondii subsp. laumondii (strain DSM 15139 / CIP 105565 / TT01) (Photorhabdus luminescens subsp. laumondii) protein is Holo-[acyl-carrier-protein] synthase.